The primary structure comprises 146 residues: Large ribosomal subunit protein uL15 (146 aa).

A compositionally biased stretch (basic and acidic residues) spans Met-1–Pro-10. Residues Met-1–Gly-52 are disordered.

The protein belongs to the universal ribosomal protein uL15 family. Part of the 50S ribosomal subunit.

In terms of biological role, binds to the 23S rRNA. In Mycolicibacterium paratuberculosis (strain ATCC BAA-968 / K-10) (Mycobacterium paratuberculosis), this protein is Large ribosomal subunit protein uL15.